We begin with the raw amino-acid sequence, 239 residues long: Probable 2-phosphosulfolactate phosphatase (239 aa).

The protein belongs to the ComB family. Mg(2+) is required as a cofactor.

It catalyses the reaction (2R)-O-phospho-3-sulfolactate + H2O = (2R)-3-sulfolactate + phosphate. The chain is Probable 2-phosphosulfolactate phosphatase from Clostridium botulinum (strain Langeland / NCTC 10281 / Type F).